We begin with the raw amino-acid sequence, 29 residues long: Kalata-B4 (29 aa).

The cyclopeptide (Gly-Asp) cross-link spans 1 to 29 (GLPVCGETCVGGTCNTPGCTCSWPVCTRD). 3 cysteine pairs are disulfide-bonded: C5–C19, C9–C21, and C14–C26.

In terms of processing, this is a cyclic peptide.

In terms of biological role, probably participates in a plant defense mechanism. In Oldenlandia affinis, this protein is Kalata-B4.